A 187-amino-acid chain; its full sequence is UPF0340 protein SP70585_0722 (187 aa).

It belongs to the UPF0340 family.

This chain is UPF0340 protein SP70585_0722, found in Streptococcus pneumoniae (strain 70585).